Consider the following 119-residue polypeptide: Large ribosomal subunit protein bL19 (119 aa).

This sequence belongs to the bacterial ribosomal protein bL19 family.

In terms of biological role, this protein is located at the 30S-50S ribosomal subunit interface and may play a role in the structure and function of the aminoacyl-tRNA binding site. This is Large ribosomal subunit protein bL19 (rplS) from Mycoplasma pneumoniae (strain ATCC 29342 / M129 / Subtype 1) (Mycoplasmoides pneumoniae).